The chain runs to 611 residues: MPKLRSATSTQGRNMAGARALWRATGMKENDFGKPIIAVVNSFTQFVPGHVHLKDMGQLVAEQIEKAGGVAKEFNTIAVDDGIAMGHGGMLYSLPSRDLIADSVEYMVNAHCADAMVCISNCDKITPGMLMAALRLNIPTIFVSGGPMEAGKTKLSDQIIKLDLVDAMIQGANPNVSDEVSDQIERSACPTCGSCSGMFTANSMNCLTEALGLSLPGNGSCLATHADRKQLFLDAGTQIVELCKKYYEQDDLSVLPRSIATKAAFDNAMSLDIAMGGSTNTVLHLLAAAQEAEVDFTMADIDRLSRQVPCLSKVAPNTQKYHMEDVHRAGGIMAILGELDRAGLLNNQTRTVLGLSLAEQIAKYDIMLTKDEAVHKFFRAGPAGIRTTKAFSQDTRWDTVDDDRQNGCIRSKEFAYSQDGGLAMLSGNIALDGCIVKTAGVDEAILKFKGEAIVFESQEDAVAGILGGKVRAGHVVVIRYEGPKGGPGMQEMLYPTSYLKSMGLGKACALLTDGRFSGGTSGLSIGHCSPEAAAGGLIGLVKDGDTIEIDIPNRKIELVVPEAELAQRRAEQDAKGWKPANREREVSFALKVYGHFATSADKGAVRDKSKI.

Asp-81 lines the Mg(2+) pocket. Cys-122 contacts [2Fe-2S] cluster. Mg(2+) is bound by residues Asp-123 and Lys-124. At Lys-124 the chain carries N6-carboxylysine. Position 195 (Cys-195) interacts with [2Fe-2S] cluster. Glu-491 is a binding site for Mg(2+). Ser-517 functions as the Proton acceptor in the catalytic mechanism.

This sequence belongs to the IlvD/Edd family. Homodimer. [2Fe-2S] cluster is required as a cofactor. Requires Mg(2+) as cofactor.

The catalysed reaction is (2R)-2,3-dihydroxy-3-methylbutanoate = 3-methyl-2-oxobutanoate + H2O. It carries out the reaction (2R,3R)-2,3-dihydroxy-3-methylpentanoate = (S)-3-methyl-2-oxopentanoate + H2O. It functions in the pathway amino-acid biosynthesis; L-isoleucine biosynthesis; L-isoleucine from 2-oxobutanoate: step 3/4. It participates in amino-acid biosynthesis; L-valine biosynthesis; L-valine from pyruvate: step 3/4. Functionally, functions in the biosynthesis of branched-chain amino acids. Catalyzes the dehydration of (2R,3R)-2,3-dihydroxy-3-methylpentanoate (2,3-dihydroxy-3-methylvalerate) into 2-oxo-3-methylpentanoate (2-oxo-3-methylvalerate) and of (2R)-2,3-dihydroxy-3-methylbutanoate (2,3-dihydroxyisovalerate) into 2-oxo-3-methylbutanoate (2-oxoisovalerate), the penultimate precursor to L-isoleucine and L-valine, respectively. This is Dihydroxy-acid dehydratase from Glaesserella parasuis serovar 5 (strain SH0165) (Haemophilus parasuis).